Reading from the N-terminus, the 27-residue chain is Superoxide dismutase [Mn] (27 aa).

The protein belongs to the iron/manganese superoxide dismutase family. In terms of assembly, homodimer. The cofactor is Mn(2+).

The enzyme catalyses 2 superoxide + 2 H(+) = H2O2 + O2. Functionally, destroys superoxide anion radicals which are normally produced within the cells and which are toxic to biological systems. This Desulfovibrio desulfuricans protein is Superoxide dismutase [Mn] (sodA).